The following is a 148-amino-acid chain: Suppressor APC domain-containing protein 1 (148 aa).

Residues 120-148 form a disordered region; the sequence is SRQQKGVTQPKEEMAQRGCTKGPRGPTRV.

This chain is Suppressor APC domain-containing protein 1 (SAPCD1), found in Homo sapiens (Human).